A 296-amino-acid chain; its full sequence is Thioredoxin-related transmembrane protein 2 (296 aa).

A signal peptide spans 1 to 48 (MAVLAPLIALVYSVPRLSRWLAQPYYLLSALLSAAFLLVRKLPPLCHG). Over 49–102 (LPTQREDGNPCDFDWREVEILMFLSAIVMMKNRRSITVEQHIGNIFMFSKVANA) the chain is Extracellular. A helical transmembrane segment spans residues 103-125 (ILFFRLDIRMGLLYITLCIVFLM). In terms of domain architecture, Thioredoxin spans 114-269 (LLYITLCIVF…LYQRAKKLSK (156 aa)). Over 126–296 (TCKPPLYMGP…VSDGESKKDK (171 aa)) the chain is Cytoplasmic. Phosphoserine occurs at positions 211, 243, and 288. The disordered stretch occupies residues 269-296 (KAGDNIPEEQPVAPTPTRVSDGESKKDK). Residues 293-296 (KKDK) carry the Di-lysine motif motif.

Monomer. Homodimer; disulfide-linked. Occurs in both reduced and oxidized monomeric form. Oxidative conditions increase homodimerization. Interacts with CANX. Interacts with ATP2A2.

The protein resides in the endoplasmic reticulum membrane. It localises to the mitochondrion membrane. Its function is as follows. Endoplasmic reticulum and mitochondria-associated protein that probably functions as a regulator of cellular redox state and thereby regulates protein post-translational modification, protein folding and mitochondrial activity. Indirectly regulates neuronal proliferation, migration, and organization in the developing brain. The sequence is that of Thioredoxin-related transmembrane protein 2 (TMX2) from Macaca fascicularis (Crab-eating macaque).